Here is a 776-residue protein sequence, read N- to C-terminus: Protein FAM83C (776 aa).

The tract at residues 1–340 (MQGCQAGASI…LYAESQPVEG (340 aa)) is DUF1669. Disordered regions lie at residues 344–467 (NEDP…STSP), 494–565 (SRLP…SLQH), 617–653 (HGQLDLLPQNPKPQAPKIPSDAYSSAGPSKPSLDDRR), 669–694 (PFRSEGPGPSCPPEPSPVRMAGVGSA), and 716–745 (QGARQKPEPGIPGAPVSGHQNGSSNDLFAP). Residues 368 to 385 (SATGSSPSSNSLSSIKHS) are compositionally biased toward low complexity. The segment covering 452 to 467 (PWSQSSPALNHSSTSP) has biased composition (polar residues). Residues 523-539 (VEEKKVSLSQSHDHLDR) are compositionally biased toward basic and acidic residues. Residues 554–563 (SRVTPDSSSL) show a composition bias toward polar residues.

The protein belongs to the FAM83 family. Directly interacts (via DUF1669) with CSNK1A1 and CSNK1A1L. May interact with RAF1. In terms of processing, phosphorylated by CSNK1A1.

It is found in the cytoplasm. In terms of biological role, may play a role in MAPK signaling. The polypeptide is Protein FAM83C (Mus musculus (Mouse)).